The sequence spans 296 residues: Light-independent protochlorophyllide reductase iron-sulfur ATP-binding protein (296 aa).

The segment at 1–20 (MTTTLSRPTDGEGSVQVQQD) is disordered. ATP is bound by residues 39–44 (GIGKST) and Lys68. Ser43 lines the Mg(2+) pocket. Residues Cys124 and Cys158 each coordinate [4Fe-4S] cluster. Residue 209 to 210 (NR) participates in ATP binding.

This sequence belongs to the NifH/BchL/ChlL family. In terms of assembly, homodimer. Protochlorophyllide reductase is composed of three subunits; ChlL, ChlN and ChlB. Requires [4Fe-4S] cluster as cofactor.

It carries out the reaction chlorophyllide a + oxidized 2[4Fe-4S]-[ferredoxin] + 2 ADP + 2 phosphate = protochlorophyllide a + reduced 2[4Fe-4S]-[ferredoxin] + 2 ATP + 2 H2O. It participates in porphyrin-containing compound metabolism; chlorophyll biosynthesis (light-independent). In terms of biological role, component of the dark-operative protochlorophyllide reductase (DPOR) that uses Mg-ATP and reduced ferredoxin to reduce ring D of protochlorophyllide (Pchlide) to form chlorophyllide a (Chlide). This reaction is light-independent. The L component serves as a unique electron donor to the NB-component of the complex, and binds Mg-ATP. This Synechococcus sp. (strain CC9902) protein is Light-independent protochlorophyllide reductase iron-sulfur ATP-binding protein.